The primary structure comprises 35 residues: Tau/kappa-theraphotoxin-Pc1a (35 aa).

Intrachain disulfides connect C3-C17, C10-C22, and C16-C29. The residue at position 35 (F35) is a Phenylalanine amide.

The protein belongs to the neurotoxin 10 (Hwtx-1) family. 62 (Vatx) subfamily. As to expression, expressed by the venom gland.

It localises to the secreted. Functionally, selectively activates mammalian TRPV1, the capsaicin receptor, a non-selective cation channel expressed by sensory neurons of the pain pathway. Is less potent than VaTx2 and VaTx3. Interacts with distinct regions of the channel than capsaicin, since it only acts on the extracellular face of the channel, and capsaicin binds to the cytosolic side. Also activates avian TRPV1, which is insensitive to capsaicin. Significantly inhibits potassium channels Kv2.1/KCNB1. The sequence is that of Tau/kappa-theraphotoxin-Pc1a from Psalmopoeus cambridgei (Trinidad chevron tarantula).